A 414-amino-acid chain; its full sequence is Enolase (414 aa).

(2R)-2-phosphoglycerate is bound at residue Gln162. The active-site Proton donor is the Glu204. Residues Asp239, Glu280, and Asp307 each coordinate Mg(2+). Lys332, Arg361, Ser362, and Lys383 together coordinate (2R)-2-phosphoglycerate. Lys332 serves as the catalytic Proton acceptor.

This sequence belongs to the enolase family. Requires Mg(2+) as cofactor.

The protein localises to the cytoplasm. The protein resides in the secreted. It is found in the cell surface. It catalyses the reaction (2R)-2-phosphoglycerate = phosphoenolpyruvate + H2O. Its pathway is carbohydrate degradation; glycolysis; pyruvate from D-glyceraldehyde 3-phosphate: step 4/5. Its function is as follows. Catalyzes the reversible conversion of 2-phosphoglycerate (2-PG) into phosphoenolpyruvate (PEP). It is essential for the degradation of carbohydrates via glycolysis. The polypeptide is Enolase (Campylobacter jejuni subsp. jejuni serotype O:2 (strain ATCC 700819 / NCTC 11168)).